Here is a 180-residue protein sequence, read N- to C-terminus: Adenine phosphoribosyltransferase (180 aa).

This sequence belongs to the purine/pyrimidine phosphoribosyltransferase family. In terms of assembly, homodimer.

It is found in the cytoplasm. The enzyme catalyses AMP + diphosphate = 5-phospho-alpha-D-ribose 1-diphosphate + adenine. The protein operates within purine metabolism; AMP biosynthesis via salvage pathway; AMP from adenine: step 1/1. In terms of biological role, catalyzes a salvage reaction resulting in the formation of AMP, that is energically less costly than de novo synthesis. The polypeptide is Adenine phosphoribosyltransferase (Pasteurella multocida (strain Pm70)).